Consider the following 774-residue polypeptide: 5-methyltetrahydropteroyltriglutamate--homocysteine methyltransferase (774 aa).

5-methyltetrahydropteroyltri-L-glutamate-binding positions include 24 to 27 and Lys-120; that span reads RELK. Residues 446–448 and Glu-499 contribute to the L-homocysteine site; that span reads IGS. L-methionine-binding positions include 446–448 and Glu-499; that span reads IGS. Trp-576 lines the 5-methyltetrahydropteroyltri-L-glutamate pocket. Asp-614 is a binding site for L-homocysteine. L-methionine is bound at residue Asp-614. Glu-620 contributes to the 5-methyltetrahydropteroyltri-L-glutamate binding site. The Zn(2+) site is built by His-656, Cys-658, and Glu-680. His-709 functions as the Proton donor in the catalytic mechanism. Cys-741 serves as a coordination point for Zn(2+).

The protein belongs to the vitamin-B12 independent methionine synthase family. It depends on Zn(2+) as a cofactor.

It catalyses the reaction 5-methyltetrahydropteroyltri-L-glutamate + L-homocysteine = tetrahydropteroyltri-L-glutamate + L-methionine. The protein operates within amino-acid biosynthesis; L-methionine biosynthesis via de novo pathway; L-methionine from L-homocysteine (MetE route): step 1/1. Its function is as follows. Catalyzes the transfer of a methyl group from 5-methyltetrahydrofolate to homocysteine resulting in methionine formation. The sequence is that of 5-methyltetrahydropteroyltriglutamate--homocysteine methyltransferase from Streptomyces griseus subsp. griseus (strain JCM 4626 / CBS 651.72 / NBRC 13350 / KCC S-0626 / ISP 5235).